We begin with the raw amino-acid sequence, 378 residues long: uncharacterized protein (378 aa).

Residues Thr-150–Asn-176 are compositionally biased toward low complexity. Residues Thr-150–Cys-187 are disordered. Over residues Asn-177–Cys-187 the composition is skewed to basic and acidic residues.

This is an uncharacterized protein from Dictyostelium discoideum (Social amoeba).